The chain runs to 177 residues: Large ribosomal subunit protein uL6 (177 aa).

The protein belongs to the universal ribosomal protein uL6 family. Part of the 50S ribosomal subunit.

Functionally, this protein binds to the 23S rRNA, and is important in its secondary structure. It is located near the subunit interface in the base of the L7/L12 stalk, and near the tRNA binding site of the peptidyltransferase center. This is Large ribosomal subunit protein uL6 from Rhodopseudomonas palustris (strain BisB5).